The sequence spans 74 residues: uncharacterized protein (74 aa).

The next 2 helical transmembrane spans lie at 3–23 (YSAL…CFSF) and 35–55 (ILFF…MLLT).

It is found in the cell membrane. This is an uncharacterized protein from Mycoplasma genitalium (strain ATCC 33530 / DSM 19775 / NCTC 10195 / G37) (Mycoplasmoides genitalium).